Reading from the N-terminus, the 373-residue chain is Glutamate 5-kinase (373 aa).

Lys-15 contacts ATP. Substrate contacts are provided by Ser-55, Asp-142, and Asn-154. Residue 174–175 (TD) coordinates ATP. In terms of domain architecture, PUA spans 281-359 (RGSVVLDDGA…SQIEAVLGYV (79 aa)).

The protein belongs to the glutamate 5-kinase family.

It is found in the cytoplasm. It carries out the reaction L-glutamate + ATP = L-glutamyl 5-phosphate + ADP. It functions in the pathway amino-acid biosynthesis; L-proline biosynthesis; L-glutamate 5-semialdehyde from L-glutamate: step 1/2. In terms of biological role, catalyzes the transfer of a phosphate group to glutamate to form L-glutamate 5-phosphate. The chain is Glutamate 5-kinase from Nitrosomonas eutropha (strain DSM 101675 / C91 / Nm57).